Here is a 429-residue protein sequence, read N- to C-terminus: Enolase (429 aa).

Gln-163 lines the (2R)-2-phosphoglycerate pocket. The active-site Proton donor is the Glu-205. Mg(2+) is bound by residues Asp-242, Glu-287, and Asp-314. 4 residues coordinate (2R)-2-phosphoglycerate: Lys-339, Arg-368, Ser-369, and Lys-390. The active-site Proton acceptor is Lys-339.

The protein belongs to the enolase family. The cofactor is Mg(2+).

The protein localises to the cytoplasm. It is found in the secreted. It localises to the cell surface. It catalyses the reaction (2R)-2-phosphoglycerate = phosphoenolpyruvate + H2O. It functions in the pathway carbohydrate degradation; glycolysis; pyruvate from D-glyceraldehyde 3-phosphate: step 4/5. Its function is as follows. Catalyzes the reversible conversion of 2-phosphoglycerate (2-PG) into phosphoenolpyruvate (PEP). It is essential for the degradation of carbohydrates via glycolysis. This is Enolase from Cupriavidus taiwanensis (strain DSM 17343 / BCRC 17206 / CCUG 44338 / CIP 107171 / LMG 19424 / R1) (Ralstonia taiwanensis (strain LMG 19424)).